The following is a 447-amino-acid chain: GTPase Der (447 aa).

EngA-type G domains are found at residues 3 to 167 (PVIA…VQER) and 181 to 354 (VKIA…AAAM). GTP-binding positions include 9–16 (GRPNVGKS), 56–60 (DTGGF), 119–122 (NKAE), 187–194 (GRPNVGKS), 234–238 (DTAGL), and 299–302 (NKWD). The region spanning 355 to 439 (VKLPTPQLTR…PLRIEFRTNK (85 aa)) is the KH-like domain.

Belongs to the TRAFAC class TrmE-Era-EngA-EngB-Septin-like GTPase superfamily. EngA (Der) GTPase family. As to quaternary structure, associates with the 50S ribosomal subunit.

Functionally, GTPase that plays an essential role in the late steps of ribosome biogenesis. This chain is GTPase Der, found in Cupriavidus taiwanensis (strain DSM 17343 / BCRC 17206 / CCUG 44338 / CIP 107171 / LMG 19424 / R1) (Ralstonia taiwanensis (strain LMG 19424)).